The chain runs to 61 residues: UPF0434 protein PFLU_3771 (61 aa).

The protein belongs to the UPF0434 family.

The polypeptide is UPF0434 protein PFLU_3771 (Pseudomonas fluorescens (strain SBW25)).